Here is a 340-residue protein sequence, read N- to C-terminus: Nicotinate-nucleotide--dimethylbenzimidazole phosphoribosyltransferase (340 aa).

The active-site Proton acceptor is the Glu-305.

It belongs to the CobT family.

It carries out the reaction 5,6-dimethylbenzimidazole + nicotinate beta-D-ribonucleotide = alpha-ribazole 5'-phosphate + nicotinate + H(+). Its pathway is nucleoside biosynthesis; alpha-ribazole biosynthesis; alpha-ribazole from 5,6-dimethylbenzimidazole: step 1/2. In terms of biological role, catalyzes the synthesis of alpha-ribazole-5'-phosphate from nicotinate mononucleotide (NAMN) and 5,6-dimethylbenzimidazole (DMB). The protein is Nicotinate-nucleotide--dimethylbenzimidazole phosphoribosyltransferase of Allorhizobium ampelinum (strain ATCC BAA-846 / DSM 112012 / S4) (Agrobacterium vitis (strain S4)).